Here is a 457-residue protein sequence, read N- to C-terminus: Dihydrolipoyllysine-residue acetyltransferase component of pyruvate dehydrogenase complex, mitochondrial (457 aa).

Residues 1-30 (MLSAALRRRVLAPTHSALRTGFAAHVVRHY) constitute a mitochondrion transit peptide. Positions 36 to 112 (HQVIKMPALS…PVGSPIAVLV (77 aa)) constitute a Lipoyl-binding domain. At lysine 77 the chain carries N6-lipoyllysine. The interval 129-168 (AGGDAAKPAAPKKEEKSESKSESASAPEPTPEPQQYQSQG) is disordered. Residues 139-149 (PKKEEKSESKS) are compositionally biased toward basic and acidic residues. An N6-crotonyllysine modification is found at lysine 148. A Peripheral subunit-binding (PSBD) domain is found at 179-216 (NISASAKRLAREKGISIDGLKGTGKNGQITEEDVKKAI). Residues histidine 430 and aspartate 434 contribute to the active site.

Belongs to the 2-oxoacid dehydrogenase family. Eukaryotic pyruvate dehydrogenase (PDH) complexes are organized as a core consisting of the oligomeric dihydrolipoamide acetyl-transferase (E2), around which are arranged multiple copies of pyruvate dehydrogenase (E1), dihydrolipoamide dehydrogenase (E3) and protein X (E3BP) bound by non-covalent bonds. Interacts with SIR5; the interaction is direct. The cofactor is (R)-lipoate. Post-translationally, decrotonylated at 'Lys-148' by SIR5, which inhibits the activity of the pyruvate dehydrogenase complex (PDC).

It localises to the mitochondrion matrix. The enzyme catalyses N(6)-[(R)-dihydrolipoyl]-L-lysyl-[protein] + acetyl-CoA = N(6)-[(R)-S(8)-acetyldihydrolipoyl]-L-lysyl-[protein] + CoA. Functionally, the pyruvate dehydrogenase complex catalyzes the overall conversion of pyruvate to acetyl-CoA and CO(2). High pyruvate dehydrogenase complex activity is required for sufficient energy production during germination of conidia. The sequence is that of Dihydrolipoyllysine-residue acetyltransferase component of pyruvate dehydrogenase complex, mitochondrial from Fusarium oxysporum f. sp. lycopersici (strain 4287 / CBS 123668 / FGSC 9935 / NRRL 34936) (Fusarium vascular wilt of tomato).